The chain runs to 132 residues: DNA-directed RNA polymerase subunit omega (132 aa).

This sequence belongs to the RNA polymerase subunit omega family. As to quaternary structure, the RNAP catalytic core consists of 2 alpha, 1 beta, 1 beta' and 1 omega subunit. When a sigma factor is associated with the core the holoenzyme is formed, which can initiate transcription.

The catalysed reaction is RNA(n) + a ribonucleoside 5'-triphosphate = RNA(n+1) + diphosphate. In terms of biological role, promotes RNA polymerase assembly. Latches the N- and C-terminal regions of the beta' subunit thereby facilitating its interaction with the beta and alpha subunits. The protein is DNA-directed RNA polymerase subunit omega of Bartonella quintana (strain Toulouse) (Rochalimaea quintana).